The sequence spans 85 residues: Elongation factor 1-beta (85 aa).

It belongs to the EF-1-beta/EF-1-delta family.

Promotes the exchange of GDP for GTP in EF-1-alpha/GDP, thus allowing the regeneration of EF-1-alpha/GTP that could then be used to form the ternary complex EF-1-alpha/GTP/AAtRNA. The polypeptide is Elongation factor 1-beta (Methanoregula boonei (strain DSM 21154 / JCM 14090 / 6A8)).